Here is a 354-residue protein sequence, read N- to C-terminus: tRNA-specific 2-thiouridylase MnmA (354 aa).

ATP-binding positions include L6 to S13 and L33. The active-site Nucleophile is C100. Cysteines 100 and 195 form a disulfide. G123 is a binding site for ATP. The tract at residues K145 to Q147 is interaction with tRNA. Residue C195 is the Cysteine persulfide intermediate of the active site.

This sequence belongs to the MnmA/TRMU family.

The protein localises to the cytoplasm. It catalyses the reaction S-sulfanyl-L-cysteinyl-[protein] + uridine(34) in tRNA + AH2 + ATP = 2-thiouridine(34) in tRNA + L-cysteinyl-[protein] + A + AMP + diphosphate + H(+). Functionally, catalyzes the 2-thiolation of uridine at the wobble position (U34) of tRNA, leading to the formation of s(2)U34. The sequence is that of tRNA-specific 2-thiouridylase MnmA from Borrelia recurrentis (strain A1).